The following is a 245-amino-acid chain: Probable phosphatase YcdX (245 aa).

Residues His7, His9, His15, His40, Glu73, His101, His131, Asp192, and His194 each contribute to the Zn(2+) site.

The protein belongs to the PHP family. As to quaternary structure, homotrimer. Requires Zn(2+) as cofactor.

This Salmonella heidelberg (strain SL476) protein is Probable phosphatase YcdX.